We begin with the raw amino-acid sequence, 305 residues long: 5'-hydroxyaverantin dehydrogenase stcG (305 aa).

Positions 25, 27, 48, 68, 186, 190, and 221 each coordinate NADP(+). The active-site Proton acceptor is Y186. K190 acts as the Lowers pKa of active site Tyr in catalysis.

Belongs to the short-chain dehydrogenases/reductases (SDR) family.

The catalysed reaction is (1'S,5'S)-5'-hydroxyaverantin + NAD(+) = (S)-5'-oxoaverantin + NADH + H(+). The enzyme catalyses (1'S,5'R)-5'-hydroxyaverantin + NAD(+) = (S)-5'-oxoaverantin + NADH + 2 H(+). It functions in the pathway mycotoxin biosynthesis; sterigmatocystin biosynthesis. Its function is as follows. 5'-hydroxyaverantin dehydrogenase; part of the gene cluster that mediates the biosynthesis of sterigmatocystin (ST), a polyketide-derived furanocoumarin which is part of the most toxic and carcinogenic compounds among the known mycotoxins. The first step in the biosynthesis of sterigmatocystin is the production of hexanoate by the fatty acid synthase (FAS) units stcJ and stcK. The polyketide backbone is assembled by the non-reducing polyketide synthase stcA by condensation of the starter hexanoyl-CoA and 7 malonyl-CoA extender units followed by cyclization and release of norsolorinic acid. Norsolorinic acid is the first stable intermediate in the biosynthesis of sterigmatocystin and is converted into averantin (AVN) by the ketoreductase stcE which reduces the hexanoate ketone to an alcohol. Averantin is then oxidized into 5'-hydroxyaverantin (HAVN) by the cytochrome P450 monooxygenase stcF. 5'-hydroxyaverantin is further converted to 5'-oxyaverantin (OAVN) by the 5'-hydroxyaverantin dehydrogenase stcG. The next step is the conversion of OAVN into averufin (AVF) which is catalyzed by a yet to be identified enzyme. The cytochrome P450 monooxygenase stcB and the flavin-binding monooxygenase stcW are both required for the conversion of averufin to 1-hydroxyversicolorone. The esterase stcI probably catalyzes the formation of versiconal hemiacetal acetate from 1-hydroxyversicolorone. The oxydoreductase stcN then probably catalyzes the biosynthetic step from versiconal to versicolorin B (VERB). The next step is performed by the versicolorin B desaturase stcL to produce versicolorin A (VERA). The ketoreductase stcU and the cytochrome P450 monooxygenase stcS are involved in the conversion of versicolorin A to demethylsterigmatocystin. The Baeyer-Villiger oxidas stcQ and the reductase stcR might be involved in the biosynthetic step from versicolorin A to demethylsterigmatocystin. The final step in the biosynthesis of sterigmatocystin is the methylation of demethylsterigmatocystin catalyzed by the methyltransferase stcP. The sequence is that of 5'-hydroxyaverantin dehydrogenase stcG from Emericella nidulans (strain FGSC A4 / ATCC 38163 / CBS 112.46 / NRRL 194 / M139) (Aspergillus nidulans).